The primary structure comprises 250 residues: Triosephosphate isomerase (250 aa).

9–11 (NWK) contributes to the substrate binding site. Histidine 95 serves as the catalytic Electrophile. Residue glutamate 167 is the Proton acceptor of the active site. Residues glycine 173, serine 213, and 234 to 235 (GG) each bind substrate.

Belongs to the triosephosphate isomerase family. As to quaternary structure, homodimer.

Its subcellular location is the cytoplasm. It catalyses the reaction D-glyceraldehyde 3-phosphate = dihydroxyacetone phosphate. The protein operates within carbohydrate biosynthesis; gluconeogenesis. It functions in the pathway carbohydrate degradation; glycolysis; D-glyceraldehyde 3-phosphate from glycerone phosphate: step 1/1. Its function is as follows. Involved in the gluconeogenesis. Catalyzes stereospecifically the conversion of dihydroxyacetone phosphate (DHAP) to D-glyceraldehyde-3-phosphate (G3P). The protein is Triosephosphate isomerase of Exiguobacterium sibiricum (strain DSM 17290 / CCUG 55495 / CIP 109462 / JCM 13490 / 255-15).